A 474-amino-acid chain; its full sequence is tRNA-2-methylthio-N(6)-dimethylallyladenosine synthase (474 aa).

Residues 3–120 (KKLHIKTWGC…LPEMINHVQG (118 aa)) form the MTTase N-terminal domain. [4Fe-4S] cluster is bound by residues cysteine 12, cysteine 49, cysteine 83, cysteine 157, cysteine 161, and cysteine 164. One can recognise a Radical SAM core domain in the interval 143–375 (RADGPTAFVS…QDRITKQAMR (233 aa)). In terms of domain architecture, TRAM spans 378–441 (RLMLGTVQRI…TNSLRGIVVR (64 aa)).

Belongs to the methylthiotransferase family. MiaB subfamily. In terms of assembly, monomer. The cofactor is [4Fe-4S] cluster.

It localises to the cytoplasm. The catalysed reaction is N(6)-dimethylallyladenosine(37) in tRNA + (sulfur carrier)-SH + AH2 + 2 S-adenosyl-L-methionine = 2-methylsulfanyl-N(6)-dimethylallyladenosine(37) in tRNA + (sulfur carrier)-H + 5'-deoxyadenosine + L-methionine + A + S-adenosyl-L-homocysteine + 2 H(+). In terms of biological role, catalyzes the methylthiolation of N6-(dimethylallyl)adenosine (i(6)A), leading to the formation of 2-methylthio-N6-(dimethylallyl)adenosine (ms(2)i(6)A) at position 37 in tRNAs that read codons beginning with uridine. This chain is tRNA-2-methylthio-N(6)-dimethylallyladenosine synthase, found in Pectobacterium atrosepticum (strain SCRI 1043 / ATCC BAA-672) (Erwinia carotovora subsp. atroseptica).